A 227-amino-acid polypeptide reads, in one-letter code: ATP phosphoribosyltransferase (227 aa).

It belongs to the ATP phosphoribosyltransferase family. Short subfamily. As to quaternary structure, heteromultimer composed of HisG and HisZ subunits.

The protein localises to the cytoplasm. It carries out the reaction 1-(5-phospho-beta-D-ribosyl)-ATP + diphosphate = 5-phospho-alpha-D-ribose 1-diphosphate + ATP. Its pathway is amino-acid biosynthesis; L-histidine biosynthesis; L-histidine from 5-phospho-alpha-D-ribose 1-diphosphate: step 1/9. Functionally, catalyzes the condensation of ATP and 5-phosphoribose 1-diphosphate to form N'-(5'-phosphoribosyl)-ATP (PR-ATP). Has a crucial role in the pathway because the rate of histidine biosynthesis seems to be controlled primarily by regulation of HisG enzymatic activity. In Bordetella avium (strain 197N), this protein is ATP phosphoribosyltransferase.